Consider the following 85-residue polypeptide: METVVGLTAIAVALLIGLGALGTAIGFGLLGGKFLEGAARQPEMVPMLQVKMFIVAGLLDAVTMIGVGIALFFTFANPFVGQLAG.

A run of 2 helical transmembrane segments spans residues 10 to 30 (IAVALLIGLGALGTAIGFGLL) and 53 to 73 (FIVAGLLDAVTMIGVGIALFF).

Belongs to the ATPase C chain family. In terms of assembly, F-type ATPases have 2 components, F(1) - the catalytic core - and F(0) - the membrane proton channel. F(1) has five subunits: alpha(3), beta(3), gamma(1), delta(1), epsilon(1). F(0) has three main subunits: a(1), b(2) and c(10-14). The alpha and beta chains form an alternating ring which encloses part of the gamma chain. F(1) is attached to F(0) by a central stalk formed by the gamma and epsilon chains, while a peripheral stalk is formed by the delta and b chains.

The protein localises to the cell inner membrane. F(1)F(0) ATP synthase produces ATP from ADP in the presence of a proton or sodium gradient. F-type ATPases consist of two structural domains, F(1) containing the extramembraneous catalytic core and F(0) containing the membrane proton channel, linked together by a central stalk and a peripheral stalk. During catalysis, ATP synthesis in the catalytic domain of F(1) is coupled via a rotary mechanism of the central stalk subunits to proton translocation. Functionally, key component of the F(0) channel; it plays a direct role in translocation across the membrane. A homomeric c-ring of between 10-14 subunits forms the central stalk rotor element with the F(1) delta and epsilon subunits. In Pseudomonas syringae pv. syringae (strain B728a), this protein is ATP synthase subunit c.